A 232-amino-acid polypeptide reads, in one-letter code: Ribonuclease 3 (232 aa).

Positions 5–134 constitute an RNase III domain; sequence NDAISKIIDY…LIGAIYIDGG (130 aa). A Mg(2+)-binding site is contributed by glutamate 47. Aspartate 51 is an active-site residue. Residues asparagine 120 and glutamate 123 each contribute to the Mg(2+) site. Residue glutamate 123 is part of the active site. The DRBM domain maps to 159-228; sequence DPKTSLQEWT…AELMLEKIGK (70 aa).

It belongs to the ribonuclease III family. In terms of assembly, homodimer. It depends on Mg(2+) as a cofactor.

The protein localises to the cytoplasm. The catalysed reaction is Endonucleolytic cleavage to 5'-phosphomonoester.. In terms of biological role, digests double-stranded RNA. Involved in the processing of primary rRNA transcript to yield the immediate precursors to the large and small rRNAs (23S and 16S). Processes some mRNAs, and tRNAs when they are encoded in the rRNA operon. Processes pre-crRNA and tracrRNA of type II CRISPR loci if present in the organism. The polypeptide is Ribonuclease 3 (Wolbachia pipientis wMel).